We begin with the raw amino-acid sequence, 450 residues long: MTINLVPLLLSLITIFTIFNPSALADQSQIRSTTSQWLHFSEDLSQSTIEVSIPTIIAAVLSFFAASISSAGGIGGGGLFLSIMTIIAGLEMKTASSFSAFMVTGVSFANVGCNLFLRNPKSRDKTLIDFDLALTIQPCLLLGVSIGVICNRMFPNWLVLFLFAVFLAWSTMKTCKKGVSYWNLESERAKIKSPRDVDGIEVARSPLLSEEREDVRQRGMIRFPWMKLGVLVIIWLLFFSINLFRGNKYGQGIISIKPCGALYWFLSSLQIPLTIFFTLCIYFSDNVQSNHTSHSNQNSEQETGVGGRQNKLMLPVMALLAGVLGGLFGIGGGMLISPLLLQIGIAPEVTAATCSFMVLFSSSMSAIQYLLLGMEHAGTAAIFALVCFVASLVGLMVVKKVIAKYGRASIIVFAVGIVMALSTVLMTTHGAFNVWNDFVSGRYMGFKLPC.

The next 12 helical transmembrane spans lie at 5–25 (LVPL…SALA), 48–68 (TIEV…AASI), 70–90 (SAGG…IAGL), 97–117 (SFSA…NLFL), 130–150 (FDLA…GVIC), 153–173 (MFPN…STMK), 223–243 (FPWM…SINL), 261–281 (ALYW…TLCI), 316–336 (VMAL…GMLI), 340–360 (LLQI…MVLF), 378–398 (GTAA…LMVV), and 408–428 (ASII…LMTT).

Belongs to the 4-toluene sulfonate uptake permease (TSUP) (TC 2.A.102) family.

The protein resides in the membrane. The chain is Sulfite exporter TauE/SafE family protein 1 from Arabidopsis thaliana (Mouse-ear cress).